We begin with the raw amino-acid sequence, 829 residues long: Probable beta-glucosidase H (829 aa).

The active site involves D225. Positions R389 to V548 constitute a PA14 domain. 5 N-linked (GlcNAc...) asparagine glycosylation sites follow: N416, N431, N473, N602, and N627.

Belongs to the glycosyl hydrolase 3 family.

It is found in the secreted. It catalyses the reaction Hydrolysis of terminal, non-reducing beta-D-glucosyl residues with release of beta-D-glucose.. Its pathway is glycan metabolism; cellulose degradation. Functionally, beta-glucosidases are one of a number of cellulolytic enzymes involved in the degradation of cellulosic biomass. Catalyzes the last step releasing glucose from the inhibitory cellobiose. The protein is Probable beta-glucosidase H (bglH) of Aspergillus clavatus (strain ATCC 1007 / CBS 513.65 / DSM 816 / NCTC 3887 / NRRL 1 / QM 1276 / 107).